The primary structure comprises 1441 residues: Cleavage and polyadenylation specificity factor subunit 1 (1441 aa).

4 disordered regions span residues 404-435 (PASS…GGKT), 545-569 (EEET…DGRR), 713-775 (GGAR…PAPF), and 899-921 (FREK…EGSG). A compositionally biased stretch (basic and acidic residues) spans 410–419 (EAADKEEPPS). A phosphoserine mark is found at Ser754 and Ser764. Basic and acidic residues predominate over residues 756–773 (SKEEARRSSQPPADRDPA).

It belongs to the CPSF1 family. Component of the cleavage and polyadenylation specificity factor (CPSF) complex, composed of CPSF1, CPSF2, CPSF3, CPSF4 and FIP1L1. Found in a complex with CPSF1, FIP1L1 and PAPOLA. Interacts with FIP1L1 and SRRM1. Interacts with TUT1; the interaction is direct and mediates the recruitment of the CPSF complex on the 3'UTR of selected pre-mRNAs. Interacts with TENT2/GLD2.

Its subcellular location is the nucleus. It is found in the nucleoplasm. Its function is as follows. Component of the cleavage and polyadenylation specificity factor (CPSF) complex that plays a key role in pre-mRNA 3'-end formation, recognizing the AAUAAA signal sequence and interacting with poly(A) polymerase and other factors to bring about cleavage and poly(A) addition. This subunit is involved in the RNA recognition step of the polyadenylation reaction. May play a role in eye morphogenesis and the development of retinal ganglion cell projections to the midbrain. This Mus musculus (Mouse) protein is Cleavage and polyadenylation specificity factor subunit 1 (Cpsf1).